The sequence spans 1173 residues: PR domain zinc finger protein 10 (1173 aa).

A disordered region spans residues 146–211 (RLPPMEGADS…AEPPRPFDPN (66 aa)). Positions 154 to 167 (DSSTTINSLPSPNA) are enriched in polar residues. The span at 172-202 (KEDDDDDDDDDDDEEEEDDDGEDSDLDDWEA) shows a compositional bias: acidic residues. One can recognise an SET domain in the interval 248–366 (LPLVLYIDRF…PKQELKVWYA (119 aa)). The segment at 267 to 371 (IPKRTQFGPL…KVWYAASYAE (105 aa)) is N-terminal PR domain; essential for transcriptional activator activity. The C2H2-type 1 zinc finger occupies 395–417 (WPCYECNRRFMSSEQLQQHLNSH). Residues 430–447 (RGRTRTRRKFGPGRRPGR) show a composition bias toward basic residues. Residues 430–451 (RGRTRTRRKFGPGRRPGRPPKF) form a disordered region. 9 C2H2-type zinc fingers span residues 559–581 (FKCLQCGKAFREKEKLDQHLRFH), 589–611 (LTCDICNKGFISTSSLENHMKFH), 617–639 (YSCIFCPESFDRLDLLKDHVVVH), 645–668 (FSCPTCKKRFTDFIQVKKHVRSFH), 673–695 (YQCTECDKAFCRPDKLRLHMLRH), 701–724 (FLCSTCGKQFKRKDKLREHMQRMH), 756–779 (FKCRVCMMGFRRRGMLVNHLSKRH), 801–824 (YYCQYCEKVYKSASKRKAHILKNH), and 863–886 (VCCPHCSKQYSSKTKMVQHIRKKH). Positions 926-1153 (QAMTELSQTL…PASNSSQTTQ (228 aa)) are C-terminal glutamine-rich region; essential for transcriptional activator activity. Disordered stretches follow at residues 1014–1056 (PTSG…ANSA) and 1125–1173 (KKSS…ISKP). Low complexity predominate over residues 1150 to 1160 (QTTQYIITTTT). The segment covering 1161-1173 (NMNGSSEVHISKP) has biased composition (polar residues).

Belongs to the class V-like SAM-binding methyltransferase superfamily.

It localises to the nucleus. Transcriptional activator, essential for early embryonic development and survival of embryonic stem cells (ESCs). Supports cell growth and survival during early development by transcriptionally activating the expression of the translation initiation factor EIF3B, to sustain global translation. Activates the transcription of FLNC. The polypeptide is PR domain zinc finger protein 10 (prdm10) (Xenopus tropicalis (Western clawed frog)).